Consider the following 263-residue polypeptide: Hydroxyacylglutathione hydrolase (263 aa).

Residues histidine 60, histidine 62, aspartate 64, histidine 65, histidine 120, aspartate 137, and histidine 175 each coordinate Zn(2+).

Belongs to the metallo-beta-lactamase superfamily. Glyoxalase II family. Monomer. Zn(2+) is required as a cofactor.

The enzyme catalyses an S-(2-hydroxyacyl)glutathione + H2O = a 2-hydroxy carboxylate + glutathione + H(+). Its pathway is secondary metabolite metabolism; methylglyoxal degradation; (R)-lactate from methylglyoxal: step 2/2. In terms of biological role, thiolesterase that catalyzes the hydrolysis of S-D-lactoyl-glutathione to form glutathione and D-lactic acid. This chain is Hydroxyacylglutathione hydrolase, found in Shewanella pealeana (strain ATCC 700345 / ANG-SQ1).